Reading from the N-terminus, the 406-residue chain is Argininosuccinate synthase (406 aa).

ATP-binding positions include 13-21 (AYSGGLDTS) and A40. 2 residues coordinate L-citrulline: Y91 and S96. ATP is bound at residue G121. L-aspartate contacts are provided by T123, N127, and D128. N127 lines the L-citrulline pocket. L-citrulline is bound by residues R131, S182, S191, E267, and Y279.

This sequence belongs to the argininosuccinate synthase family. Type 1 subfamily. Homotetramer.

It localises to the cytoplasm. It catalyses the reaction L-citrulline + L-aspartate + ATP = 2-(N(omega)-L-arginino)succinate + AMP + diphosphate + H(+). The protein operates within amino-acid biosynthesis; L-arginine biosynthesis; L-arginine from L-ornithine and carbamoyl phosphate: step 2/3. This chain is Argininosuccinate synthase, found in Brucella abortus (strain S19).